A 527-amino-acid polypeptide reads, in one-letter code: Putative BTB/POZ domain-containing protein R225 (527 aa).

In terms of domain architecture, BTB spans 16 to 89; the sequence is TDLELVLTDP…YGQTNRSTDY (74 aa).

This sequence belongs to the mimivirus BTB/WD family.

In Acanthamoeba polyphaga (Amoeba), this protein is Putative BTB/POZ domain-containing protein R225.